The following is a 2113-amino-acid chain: Unconventional myosin-VIIb (2113 aa).

The region spanning 65–760 is the Myosin motor domain; it reads QGVDDMIRLG…QDTVLEIRRS (696 aa). 158 to 165 is a binding site for ATP; it reads GESGAGKT. The segment at 637–659 is actin-binding; it reads LDQLMRILTNCQPYFVRCIKPNE. IQ domains follow at residues 745-765, 763-792, 786-815, 809-838, 832-861, and 855-884; these read IFLK…ALDG, LDGA…AAVT, QRRA…GFER, ILVG…RIVQ, MRQR…AVVI, and KRRA…TGPQ. The residue at position 904 (Ser904) is a Phosphoserine. The interval 962–1578 is mediates interaction with ANKS4B; that stretch reads EEEVDSLAEY…STQLLSLLAM (617 aa). Positions 989 to 1189 constitute a MyTH4 1 domain; that stretch reads HIQKPLRYPL…PTWLELQAVK (201 aa). An FERM 1 domain is found at 1194–1503; that stretch reads IPIQVILATG…GGLKERSVFA (310 aa). Thr1339 carries the post-translational modification Phosphothreonine. At Ser1368 the chain carries Phosphoserine. A mediates interaction with CDHR2, CDHR5 and USH1C region spans residues 1497–2113; the sequence is KERSVFAMAL…GFRAPAPANP (617 aa). The SH3 domain maps to 1498-1564; that stretch reads ERSVFAMALQ…PTACLYTIPS (67 aa). MyTH4 domains lie at 1641–1790 and 1790–1896; these read YSPE…KAAE and EQNV…LNVT. Ser1642 is subject to Phosphoserine. The FERM 2 domain occupies 1796–2099; sequence LHHEVYLPND…SYVQQLLNTV (304 aa).

Belongs to the TRAFAC class myosin-kinesin ATPase superfamily. Myosin family. In terms of assembly, part of the IMAC/intermicrovillar adhesion complex/intermicrovillar tip-link complex composed of ANKS4B, MYO7B, USH1C, CDHR2 and CDHR5. Interacts with CDHR2. Interacts with CDHR5. Interacts with USH1C. Interacts with ANKS4B; requires initial interaction with USH1C. Interacts with CALML4; the interaction mediates the association of CALML4 with the IMAC/intermicrovillar adhesion complex. Expressed primarily in kidney and intestine. Detected in proximal tubule cells of the kidney and enterocytes of the intestine, specifically the distal tips of apical microvilli on these transporting epithelial cells (at protein level).

It localises to the cytoplasm. It is found in the cytoskeleton. Its subcellular location is the cell projection. The protein resides in the microvillus. Functionally, myosins are actin-based motor molecules with ATPase activity. Their highly divergent tails are presumed to bind to membranous compartments, which would be moved relative to actin filaments. As part of the intermicrovillar adhesion complex/IMAC plays a role in epithelial brush border differentiation, controlling microvilli organization and length. May link the complex to the actin core bundle of microvilli. The chain is Unconventional myosin-VIIb (Myo7b) from Mus musculus (Mouse).